Here is a 359-residue protein sequence, read N- to C-terminus: Peroxisome assembly protein 12 (359 aa).

The Peroxisomal matrix portion of the chain corresponds to 1–24; that stretch reads MSTTIRASQLASSISPKTEEKQPS. The chain crosses the membrane as a helical span at residues 25-52; the sequence is VFDIIAQENLATSIRPALQHLVKYLAFF. Topologically, residues 53 to 56 are cytoplasmic; that stretch reads KPKT. The chain crosses the membrane as a helical span at residues 57–81; sequence FLSVHRNFDEYYIIFDLILQNHYLR. Residues 82–106 lie on the Peroxisomal matrix side of the membrane; that stretch reads NYGASFTENFYSMKRIASGTGNPPN. Residues 107 to 128 form a helical membrane-spanning segment; the sequence is DGRERIMSLITLVGWPYVENKL. Residues 129–133 lie on the Cytoplasmic side of the membrane; it reads NQLYD. Residues 134–184 form a helical membrane-spanning segment; it reads RLKEVYECRSWSSINGMKAKCQKMFVIIWPYIKTALKAVKSALQLAYILNR. The Peroxisomal matrix segment spans residues 185–253; that stretch reads SSIHSPWLYF…ILGLPGIVSR (69 aa). A helical transmembrane segment spans residues 254–281; sequence LFAYGLFFVQFLDYMYNTDLAKLTKTGL. The Cytoplasmic segment spans residues 282–359; the sequence is DGAIPSPPHK…NVQHLIRLFV (78 aa). Zn(2+)-binding residues include C307, C310, C328, and C331. The RING-type; degenerate zinc-finger motif lies at 307–346; it reads CPICLKKRVNDTALFVSGYVFCYTCINQYVNTYNKCPVTG.

The protein belongs to the pex2/pex10/pex12 family. In terms of assembly, component of the PEX2-PEX10-PEX12 retrotranslocation channel.

It localises to the peroxisome membrane. The protein operates within protein modification; protein ubiquitination. Its function is as follows. Component of a retrotranslocation channel required for peroxisome organization by mediating export of the PEX5/prx-5 receptor from peroxisomes to the cytosol, thereby promoting PEX5/prx-5 recycling. The retrotranslocation channel is composed of PEX2/prx-2, PEX10/prx-10 and PEX12/prx-12; each subunit contributing transmembrane segments that coassemble into an open channel that specifically allows the passage of PEX5/prx-5 through the peroxisomal membrane. PEX12/prx-12 also regulates PEX5/prx-5 recycling by activating the E3 ubiquitin-protein ligase activity of PEX10/prx-10. When PEX5 recycling is compromised, PEX12/prx-12 stimulates PEX10-mediated polyubiquitination of PEX5/prx-5, leading to its subsequent degradation. In Caenorhabditis elegans, this protein is Peroxisome assembly protein 12 (prx-12).